An 86-amino-acid polypeptide reads, in one-letter code: Putative defensin-like protein 211 (86 aa).

A signal peptide spans 1 to 19 (MNTIVLFLTLLILVSSCTS). 3 disulfides stabilise this stretch: C55–C72, C58–C77, and C62–C79.

This sequence belongs to the DEFL family.

It is found in the secreted. The sequence is that of Putative defensin-like protein 211 from Arabidopsis thaliana (Mouse-ear cress).